The sequence spans 227 residues: MNSIEFPLLDRTTQNSVISTTSNDLSNWSRLSSLWPLLYGTSCCFIEFASLIGSRFDFDRYGLVPRSSPRQADLILTAGTVTMKMAPSLVRLYEQMPEPKYVIAMGACTITGGMFSTDSYSTVRGVDKLIPVDVYLPGCPPKPEAVIDAITKLRKKVSREIYEDRIGSQQENRYFTTNHKFHVGRSTHTGNYDQGLLYKSPSTSEIPPETETFFKYKSSVSSHELVN.

Residues Cys-43, Cys-44, Cys-108, and Cys-139 each coordinate [4Fe-4S] cluster.

The protein belongs to the complex I 20 kDa subunit family. NDH is composed of at least 16 different subunits, 5 of which are encoded in the nucleus. [4Fe-4S] cluster serves as cofactor.

It localises to the plastid. The protein resides in the chloroplast thylakoid membrane. The catalysed reaction is a plastoquinone + NADH + (n+1) H(+)(in) = a plastoquinol + NAD(+) + n H(+)(out). The enzyme catalyses a plastoquinone + NADPH + (n+1) H(+)(in) = a plastoquinol + NADP(+) + n H(+)(out). Its function is as follows. NDH shuttles electrons from NAD(P)H:plastoquinone, via FMN and iron-sulfur (Fe-S) centers, to quinones in the photosynthetic chain and possibly in a chloroplast respiratory chain. The immediate electron acceptor for the enzyme in this species is believed to be plastoquinone. Couples the redox reaction to proton translocation, and thus conserves the redox energy in a proton gradient. The chain is NAD(P)H-quinone oxidoreductase subunit K, chloroplastic from Drimys granadensis.